A 142-amino-acid polypeptide reads, in one-letter code: Glia maturation factor beta (142 aa).

Residue serine 2 is modified to N-acetylserine. The region spanning 4 to 139 (SLVVCDVAED…TEEWLREKLG (136 aa)) is the ADF-H domain.

This sequence belongs to the actin-binding proteins ADF family. GMF subfamily. Phosphorylated; stimulated by phorbol ester.

This protein causes differentiation of brain cells, stimulation of neural regeneration, and inhibition of proliferation of tumor cells. This Homo sapiens (Human) protein is Glia maturation factor beta (GMFB).